The following is a 264-amino-acid chain: Thymidylate synthase (264 aa).

Arginine 21 is a binding site for dUMP. Histidine 51 provides a ligand contact to (6R)-5,10-methylene-5,6,7,8-tetrahydrofolate. A dUMP-binding site is contributed by 126–127 (RR). Cysteine 146 acts as the Nucleophile in catalysis. Residues 166–169 (RSCD), asparagine 177, and 207–209 (HLY) contribute to the dUMP site. Residue aspartate 169 participates in (6R)-5,10-methylene-5,6,7,8-tetrahydrofolate binding. Alanine 263 contacts (6R)-5,10-methylene-5,6,7,8-tetrahydrofolate.

This sequence belongs to the thymidylate synthase family. Bacterial-type ThyA subfamily. In terms of assembly, homodimer.

The protein localises to the cytoplasm. The enzyme catalyses dUMP + (6R)-5,10-methylene-5,6,7,8-tetrahydrofolate = 7,8-dihydrofolate + dTMP. It participates in pyrimidine metabolism; dTTP biosynthesis. Functionally, catalyzes the reductive methylation of 2'-deoxyuridine-5'-monophosphate (dUMP) to 2'-deoxythymidine-5'-monophosphate (dTMP) while utilizing 5,10-methylenetetrahydrofolate (mTHF) as the methyl donor and reductant in the reaction, yielding dihydrofolate (DHF) as a by-product. This enzymatic reaction provides an intracellular de novo source of dTMP, an essential precursor for DNA biosynthesis. The chain is Thymidylate synthase from Sodalis glossinidius (strain morsitans).